The following is a 362-amino-acid chain: UDP-3-O-acylglucosamine N-acyltransferase 1 (362 aa).

Catalysis depends on His258, which acts as the Proton acceptor.

This sequence belongs to the transferase hexapeptide repeat family. LpxD subfamily. Homotrimer.

It carries out the reaction a UDP-3-O-[(3R)-3-hydroxyacyl]-alpha-D-glucosamine + a (3R)-hydroxyacyl-[ACP] = a UDP-2-N,3-O-bis[(3R)-3-hydroxyacyl]-alpha-D-glucosamine + holo-[ACP] + H(+). It participates in bacterial outer membrane biogenesis; LPS lipid A biosynthesis. In terms of biological role, catalyzes the N-acylation of UDP-3-O-acylglucosamine using 3-hydroxyacyl-ACP as the acyl donor. Is involved in the biosynthesis of lipid A, a phosphorylated glycolipid that anchors the lipopolysaccharide to the outer membrane of the cell. This is UDP-3-O-acylglucosamine N-acyltransferase 1 from Nitrobacter winogradskyi (strain ATCC 25391 / DSM 10237 / CIP 104748 / NCIMB 11846 / Nb-255).